The following is a 76-amino-acid chain: Exodeoxyribonuclease 7 small subunit (76 aa).

Belongs to the XseB family. As to quaternary structure, heterooligomer composed of large and small subunits.

The protein resides in the cytoplasm. The catalysed reaction is Exonucleolytic cleavage in either 5'- to 3'- or 3'- to 5'-direction to yield nucleoside 5'-phosphates.. Bidirectionally degrades single-stranded DNA into large acid-insoluble oligonucleotides, which are then degraded further into small acid-soluble oligonucleotides. In Legionella pneumophila subsp. pneumophila (strain Philadelphia 1 / ATCC 33152 / DSM 7513), this protein is Exodeoxyribonuclease 7 small subunit.